The sequence spans 520 residues: BTB/POZ domain-containing protein At3g50780 (520 aa).

A disordered region spans residues 43-68 (SHNSLTKHKQSSPALQPPKPEKKPSS). The region spanning 127–196 (AKVILVGKQG…MYCKDMKQRL (70 aa)) is the BTB domain.

It functions in the pathway protein modification; protein ubiquitination. Functionally, may act as a substrate-specific adapter of an E3 ubiquitin-protein ligase complex (CUL3-RBX1-BTB) which mediates the ubiquitination and subsequent proteasomal degradation of target proteins. The protein is BTB/POZ domain-containing protein At3g50780 of Arabidopsis thaliana (Mouse-ear cress).